The chain runs to 171 residues: UPF0260 protein Nham_1404 (171 aa).

Belongs to the UPF0260 family.

The sequence is that of UPF0260 protein Nham_1404 from Nitrobacter hamburgensis (strain DSM 10229 / NCIMB 13809 / X14).